Reading from the N-terminus, the 395-residue chain is F-box/LRR-repeat protein 12 (395 aa).

Residues 13–61 enclose the F-box domain; it reads TSIIHLPDDCLSFIFQRLDSVADHDSFGLTCHRWLNIQNISRRSLQFQC. LRR repeat units follow at residues 75 to 100, 101 to 126, 127 to 152, 154 to 177, 178 to 203, 226 to 250, 252 to 278, 279 to 304, 305 to 330, and 331 to 356; these read NPDVSSHHLHRLLTRFQWLEHLSLSG, CTVLNDSSLDSLRYPGARLHTLYLDC, CFGISDDGISTIASFCPNLSVVSLYR, NISDIGLETLARASLSLKCVNLSY, CPLVSDFGIKALSQACLQLESVKISN, SCQLEPKGITGIISGGGIEFLNISG, SCYIRKDGLVPIGSGIASKLRILNLRM, CRTVGDESIEAIAKGCPLLQEWNLAL, CHEVKISGWEAVGKWCRNLKKLHVNR, and CRNLCDQGLLALRCGCMNLQILYMNG.

This Arabidopsis thaliana (Mouse-ear cress) protein is F-box/LRR-repeat protein 12 (FBL12).